Consider the following 364-residue polypeptide: Cell cycle control protein 50A (364 aa).

Residues Met-1–Pro-28 are disordered. Residue Ala-2 is modified to N-acetylalanine. Residues Ala-2–Thr-49 lie on the Cytoplasmic side of the membrane. The helical transmembrane segment at Val-50 to Val-70 threads the bilayer. At Thr-71–Leu-328 the chain is on the exoplasmic loop side. Disulfide bonds link Cys-91-Cys-104, Cys-94-Cys-102, and Cys-157-Cys-171. A glycan (N-linked (GlcNAc...) asparagine) is linked at Asn-98. An N-linked (GlcNAc...) asparagine glycan is attached at Asn-297. Residues Gly-329–Ile-349 form a helical membrane-spanning segment. The Cytoplasmic segment spans residues Asn-350–Ile-364.

It belongs to the CDC50/LEM3 family. Component of various P4-ATPase flippase complexes which consists of a catalytic alpha subunit and an accessory beta subunit. Interacts with ATP8A1 to form a flippase complex; this complex forms an intermediate phosphoenzyme. The ATP8A2:TMEM30A flippase complex has been purified, and ATP8B1:TMEM30A and ATP8B2:TMEM30A flippase complexes have been shown to form intermediate phosphoenzymes in vitro. Interacts with alpha subunits ATP8A1, ATP8B1, ATP8B2, ATP8B4, ATP10A, ATP10B, ATP10D, ATP11A, ATP11B and ATP11C. N-glycosylated. Contains high mannose-type oligosaccharides. As to expression, expressed in photoreceptor cells; detected in retina outer segment (at protein level). Detected in hepatocytes liver sinusoidal endothelial cells and kidney brush border of the proximal tubules (at protein level). Expressed in brain (at protein level).

It is found in the membrane. It localises to the cell membrane. The protein resides in the golgi apparatus. The protein localises to the cytoplasmic vesicle. Its subcellular location is the secretory vesicle membrane. It is found in the apical cell membrane. In terms of biological role, accessory component of a P4-ATPase flippase complex which catalyzes the hydrolysis of ATP coupled to the transport of aminophospholipids from the outer to the inner leaflet of various membranes and ensures the maintenance of asymmetric distribution of phospholipids. Phospholipid translocation also seems to be implicated in vesicle formation and in uptake of lipid signaling molecules. The beta subunit may assist in binding of the phospholipid substrate. Required for the proper folding, assembly and ER to Golgi exit of the ATP8A2:TMEM30A flippase complex. ATP8A2:TMEM30A may be involved in regulation of neurite outgrowth, and, reconstituted to liposomes, predomiminantly transports phosphatidylserine (PS) and to a lesser extent phosphatidylethanolamine (PE). The ATP8A1:TMEM30A flippase complex seems to play a role in regulation of cell migration probably involving flippase-mediated translocation of phosphatidylethanolamine (PE) at the plasma membrane. Required for the formation of the ATP8A2, ATP8B1 and ATP8B2 P-type ATPAse intermediate phosphoenzymes. Involved in uptake of platelet-activating factor (PAF). Can also mediate the export of alpha subunits ATP8A1, ATP8B1, ATP8B2, ATP8B4, ATP10A, ATP10B, ATP10D, ATP11A, ATP11B and ATP11C from the ER to other membrane localizations. The protein is Cell cycle control protein 50A of Mus musculus (Mouse).